The chain runs to 408 residues: Histidine--tRNA ligase (408 aa).

This sequence belongs to the class-II aminoacyl-tRNA synthetase family.

The protein localises to the cytoplasm. The catalysed reaction is tRNA(His) + L-histidine + ATP = L-histidyl-tRNA(His) + AMP + diphosphate + H(+). This chain is Histidine--tRNA ligase, found in Methanospirillum hungatei JF-1 (strain ATCC 27890 / DSM 864 / NBRC 100397 / JF-1).